A 568-amino-acid chain; its full sequence is Urease subunit alpha (568 aa).

The Urease domain maps to 133-568; that stretch reads GGVDTHIHFI…LPLAQKYFLF (436 aa). Residues His-138, His-140, and Lys-221 each coordinate Ni(2+). N6-carboxylysine is present on Lys-221. Position 223 (His-223) interacts with substrate. Residues His-250 and His-276 each contribute to the Ni(2+) site. His-324 functions as the Proton donor in the catalytic mechanism. Asp-364 contacts Ni(2+).

It belongs to the metallo-dependent hydrolases superfamily. Urease alpha subunit family. Heterohexamer of 3 UreC (alpha) and 3 UreAB (gamma/beta) subunits. The cofactor is Ni cation. Carboxylation allows a single lysine to coordinate two nickel ions.

Its subcellular location is the cytoplasm. The enzyme catalyses urea + 2 H2O + H(+) = hydrogencarbonate + 2 NH4(+). It participates in nitrogen metabolism; urea degradation; CO(2) and NH(3) from urea (urease route): step 1/1. The protein is Urease subunit alpha of Deinococcus radiodurans (strain ATCC 13939 / DSM 20539 / JCM 16871 / CCUG 27074 / LMG 4051 / NBRC 15346 / NCIMB 9279 / VKM B-1422 / R1).